We begin with the raw amino-acid sequence, 323 residues long: Acetyl esterase (323 aa).

An Involved in the stabilization of the negatively charged intermediate by the formation of the oxyanion hole motif is present at residues 91-93 (HGG). Active-site residues include Ser165, Asp262, and His292.

The protein belongs to the 'GDXG' lipolytic enzyme family. Homodimer. Interacts with MalT and MelA.

Its subcellular location is the cytoplasm. Displays esterase activity towards short chain fatty esters (acyl chain length of up to 8 carbons). Able to hydrolyze triacetylglycerol (triacetin) and tributyrylglycerol (tributyrin), but not trioleylglycerol (triolein) or cholesterol oleate. Negatively regulates MalT activity by antagonizing maltotriose binding. Inhibits MelA galactosidase activity. The polypeptide is Acetyl esterase (Salmonella paratyphi A (strain ATCC 9150 / SARB42)).